A 253-amino-acid chain; its full sequence is Salivary gland SP38-40.B protein (253 aa).

An N-terminal signal peptide occupies residues 1-21 (MRIKFLVVLAVICLLAHYASA). 3 disordered regions span residues 23–51 (GMGG…VKAD), 140–168 (KDEK…KECS), and 203–253 (VQGK…DAKK). Basic and acidic residues-rich tracts occupy residues 26-51 (GDKK…VKAD) and 154-168 (PPKE…KECS). A run of 2 repeats spans residues 29–34 (KPKDAP) and 35–40 (KPKDAP). Residues 29–47 (KPKDAPKPKDAPKPKEVKP) are 3 X 6 AA approximate tandem repeats of K-P-K-D-A-P. A 1-3; approximate repeat occupies 41–47 (KPKEVKP). 2 tandem repeats follow at residues 153–156 (KPPK) and 158–161 (KPPK). Positions 153 to 166 (KPPKEKPPKKPRKE) are 3 X 4 AA approximate tandem repeats of K-P-P-K. One copy of the 2-3; approximate repeat lies at 162-166 (KPRKE). Positions 206-217 (KQKKGAKKAKGG) are enriched in basic residues. 6 tandem repeats follow at residues 222–225 (PKPG), 226–229 (PKPA), 230–233 (PKPG), 234–237 (PKPA), 238–241 (PKPV), and 242–245 (PKPA). Residues 222–249 (PKPGPKPAPKPGPKPAPKPVPKPADKPK) form a 7 X 4 AA approximate tandem repeats of P-K-P-[GAV] region. Positions 225–243 (GPKPAPKPGPKPAPKPVPK) are enriched in pro residues. The segment covering 244–253 (PADKPKDAKK) has biased composition (basic and acidic residues). The stretch at 246-249 (DKPK) is one 3-7; approximate repeat.

In terms of tissue distribution, salivary gland.

The protein localises to the secreted. Used by the larvae to construct a supramolecular structure, the larval tube. The polypeptide is Salivary gland SP38-40.B protein (SP38-40.B) (Chironomus tentans (Midge)).